We begin with the raw amino-acid sequence, 116 residues long: Methionine-R-sulfoxide reductase B1 (116 aa).

The 106-residue stretch at 1–106 folds into the MsrB domain; the sequence is MSFCSFFGGE…FSSSLKFVPK (106 aa). Cys23, Cys26, Cys71, and Cys74 together coordinate Zn(2+). Sec95 (nucleophile) is an active-site residue. A non-standard amino acid (selenocysteine) is located at residue Sec95.

The protein belongs to the MsrB Met sulfoxide reductase family. Zn(2+) is required as a cofactor. Post-translationally, truncated MSRB1/SEPX1 proteins produced by failed UGA/Sec decoding are ubiquitinated by some Cul2-RING E3 ubiquitin-protein ligase complexes (containing either PRAME, PRAMF6, PRAMF9 or FEM1C as substrate-recognition component).

It is found in the cytoplasm. It localises to the nucleus. The protein resides in the cytoskeleton. It carries out the reaction L-methionyl-[protein] + [thioredoxin]-disulfide + H2O = L-methionyl-(R)-S-oxide-[protein] + [thioredoxin]-dithiol. The catalysed reaction is [thioredoxin]-disulfide + L-methionine + H2O = L-methionine (R)-S-oxide + [thioredoxin]-dithiol. In terms of biological role, methionine-sulfoxide reductase that specifically reduces methionine (R)-sulfoxide back to methionine. While in many cases, methionine oxidation is the result of random oxidation following oxidative stress, methionine oxidation is also a post-translational modification that takes place on specific residue. Acts as a regulator of actin assembly by reducing methionine (R)-sulfoxide mediated by MICALs (MICAL1, MICAL2 or MICAL3) on actin, thereby promoting filament repolymerization. Plays a role in innate immunity by reducing oxidized actin, leading to actin repolymerization in macrophages. This is Methionine-R-sulfoxide reductase B1 (MSRB1) from Homo sapiens (Human).